We begin with the raw amino-acid sequence, 136 residues long: Galectin-7 (136 aa).

A Galectin domain is found at 6 to 136 (HKTSLPQGVR…DVQLHSLNIF (131 aa)). A beta-D-galactoside is bound at residue 70-76 (WGREERG).

In terms of assembly, monomer.

It is found in the cytoplasm. The protein resides in the nucleus. Its subcellular location is the secreted. Functionally, could be involved in cell-cell and/or cell-matrix interactions necessary for normal growth control. Pro-apoptotic protein that functions intracellularly upstream of JNK activation and cytochrome c release. The chain is Galectin-7 (Lgals7) from Mus musculus (Mouse).